The sequence spans 94 residues: DNA-binding protein HU (94 aa).

The interval 55-94 (RAERPGRNPKTGEPIMIAASNNPSFKPGKALKDAVKSSAG) is disordered. Residues 84-94 (ALKDAVKSSAG) show a composition bias toward basic and acidic residues.

This sequence belongs to the bacterial histone-like protein family.

In terms of biological role, histone-like DNA-binding protein which is capable of wrapping DNA to stabilize it, and thus to prevent its denaturation under extreme environmental conditions. In Xylella fastidiosa (strain Temecula1 / ATCC 700964), this protein is DNA-binding protein HU (hup).